Reading from the N-terminus, the 195-residue chain is GTP-dependent dephospho-CoA kinase (195 aa).

GTP is bound by residues Asp-49, Val-50, Asp-68, Glu-127, and Asp-150.

The protein belongs to the GTP-dependent DPCK family.

The catalysed reaction is 3'-dephospho-CoA + GTP = GDP + CoA + H(+). It participates in cofactor biosynthesis; coenzyme A biosynthesis. Its function is as follows. Catalyzes the GTP-dependent phosphorylation of the 3'-hydroxyl group of dephosphocoenzyme A to form coenzyme A (CoA). This chain is GTP-dependent dephospho-CoA kinase, found in Methanosarcina mazei (strain ATCC BAA-159 / DSM 3647 / Goe1 / Go1 / JCM 11833 / OCM 88) (Methanosarcina frisia).